The chain runs to 171 residues: Secretion monitor (171 aa).

Positions 1–30 (MIGILNRWRQFGRRYFWPHLLLGMVAASLG) are cleaved as a signal peptide.

The protein belongs to the SecM family.

Its subcellular location is the cytoplasm. It localises to the cytosol. The protein localises to the periplasm. Functionally, regulates secA expression by translational coupling of the secM secA operon. Translational pausing at a specific Pro residue 5 residues before the end of the protein may allow disruption of a mRNA repressor helix that normally suppresses secA translation initiation. This is Secretion monitor from Pectobacterium atrosepticum (strain SCRI 1043 / ATCC BAA-672) (Erwinia carotovora subsp. atroseptica).